Here is a 328-residue protein sequence, read N- to C-terminus: Malate dehydrogenase (328 aa).

Residue 12–18 participates in NAD(+) binding; it reads GAAGQIA. Residues arginine 93 and arginine 99 each coordinate substrate. Residues asparagine 106, glutamine 113, and 130–132 each bind NAD(+); that span reads VGN. Substrate-binding residues include asparagine 132 and arginine 163. The active-site Proton acceptor is histidine 188.

The protein belongs to the LDH/MDH superfamily. MDH type 2 family.

It carries out the reaction (S)-malate + NAD(+) = oxaloacetate + NADH + H(+). Catalyzes the reversible oxidation of malate to oxaloacetate. This is Malate dehydrogenase from Burkholderia cenocepacia (strain HI2424).